A 1059-amino-acid polypeptide reads, in one-letter code: MPKRSDIKKIMVIGSGPIIIGQAAEFDYAGTQACLALKEEGYSVVLVNSNPATIMTDKEIADKVYIEPITLEFVTRILRKERPDALLPTLGGQTGLNMAMELSKAGILDELGVELLGTKLSAIDQAEDRDLFKQLMEELEQPIPESEIVNTVEEAVAFATEIGYPVIVRPAFTLGGTGGGMCANEEELREIAENGLKLSPVTQCLIERSIAGFKEIEYEVMRDAEDNALVVCNMENFDPVGIHTGDSIVFAPTQTLSDIENQMLRDASLKIIRALKIEGGCNVQLALDPHSFKYYVIEVNPRVSRSSALASKATGYPIAKLAAKIAVGLTLDEMINPVTGTTYAMFEPALDYVVAKIPRFPFDKFEHGERRLGTQMKATGEVMAIGRNIEESLLKACRSLEIGVYHNEMSELAEVTDDALVEKVVKAQDDRLFYISEAIRRGYTIEELSELTKIDIFFLDKLLHIFELEQELAAHVGDVDVLKEAKRNGFSDRKIADLWNQTANQVRATRLENNIVPVYKMVDTCAAEFESSTPYFYSTYEWENESIKSDKESVIVLGSGPIRIGQGVEFDYATVHSVKAIQAAGYEAIIMNSNPETVSTDFSVSDKLYFEPLTFEDVMNVIELEQPKGVVVQFGGQTAINLAEPLSKAGVKILGTQVADLDRAEDRDLFEQALKDLDIPQPPGQTATNEEEAVEAARKIGFPVLVRPSYVLGGRAMEIVENEDDLRSYMRTAVKASPDHPVLVDSYIIGRECEVDAISDGKDVLIPGIMEHIERAGVHSGDSMAVYPPQTLSKKIQETIADYTKRLAIGLNCIGMMNIQFVIKDETVYVIEVNPRASRTVPFLSKVTDIPMAQVATNLILGKSLAEQGYKDGLYPESNHVHVKAPVFSFTKLAQVDSLLGPEMKSTGEVMGTDVTLEKALYKAFEASYLHLPTFGNVIFTIHDDTKEEALDLARRFDAIGYGIYATEGTAKFLNEHGVHATLVNKLGENDDNDIPALVRTGKAQAIINTVGNKRTYDEDGAAIRSSAIEAGIPLFTALDTADAMVRVLESRSFTTEAI.

Residues Met1–Glu401 are carboxyphosphate synthetic domain. Positions 129, 169, 175, 176, 208, 210, 215, 241, 242, 243, 284, and 298 each coordinate ATP. The ATP-grasp 1 domain occupies Lys133–Val327. Residues Gln284, Glu298, and Asn300 each coordinate Mg(2+). 3 residues coordinate Mn(2+): Gln284, Glu298, and Asn300. The interval Ile402–Ser546 is oligomerization domain. A carbamoyl phosphate synthetic domain region spans residues Ile547 to Tyr929. The ATP-grasp 2 domain maps to Glu671–Leu861. The ATP site is built by Arg707, Ser746, Ile748, Glu752, Gly777, Val778, His779, Ser780, Gln820, and Glu832. Mg(2+) contacts are provided by Gln820, Glu832, and Asn834. Mn(2+)-binding residues include Gln820, Glu832, and Asn834. Residues Leu930–Ile1059 form the MGS-like domain. The interval Leu930–Ile1059 is allosteric domain.

The protein belongs to the CarB family. As to quaternary structure, composed of two chains; the small (or glutamine) chain promotes the hydrolysis of glutamine to ammonia, which is used by the large (or ammonia) chain to synthesize carbamoyl phosphate. Tetramer of heterodimers (alpha,beta)4. Requires Mg(2+) as cofactor. The cofactor is Mn(2+).

It catalyses the reaction hydrogencarbonate + L-glutamine + 2 ATP + H2O = carbamoyl phosphate + L-glutamate + 2 ADP + phosphate + 2 H(+). The enzyme catalyses hydrogencarbonate + NH4(+) + 2 ATP = carbamoyl phosphate + 2 ADP + phosphate + 2 H(+). It participates in amino-acid biosynthesis; L-arginine biosynthesis; carbamoyl phosphate from bicarbonate: step 1/1. Its pathway is pyrimidine metabolism; UMP biosynthesis via de novo pathway; (S)-dihydroorotate from bicarbonate: step 1/3. Large subunit of the glutamine-dependent carbamoyl phosphate synthetase (CPSase). CPSase catalyzes the formation of carbamoyl phosphate from the ammonia moiety of glutamine, carbonate, and phosphate donated by ATP, constituting the first step of 2 biosynthetic pathways, one leading to arginine and/or urea and the other to pyrimidine nucleotides. The large subunit (synthetase) binds the substrates ammonia (free or transferred from glutamine from the small subunit), hydrogencarbonate and ATP and carries out an ATP-coupled ligase reaction, activating hydrogencarbonate by forming carboxy phosphate which reacts with ammonia to form carbamoyl phosphate. This chain is Carbamoyl phosphate synthase large chain, found in Streptococcus thermophilus (strain ATCC BAA-250 / LMG 18311).